Consider the following 677-residue polypeptide: DNA ligase (677 aa).

Residues 34 to 38 (DLAFD), 83 to 84 (SL), and Glu-115 contribute to the NAD(+) site. The active-site N6-AMP-lysine intermediate is the Lys-117. 4 residues coordinate NAD(+): Arg-138, Glu-180, Lys-297, and Lys-321. Residues Cys-416, Cys-419, Cys-434, and Cys-439 each contribute to the Zn(2+) site. The 82-residue stretch at 596 to 677 (KKTSQLAGLT…LIKMLETEQA (82 aa)) folds into the BRCT domain.

It belongs to the NAD-dependent DNA ligase family. LigA subfamily. Requires Mg(2+) as cofactor. Mn(2+) serves as cofactor.

It catalyses the reaction NAD(+) + (deoxyribonucleotide)n-3'-hydroxyl + 5'-phospho-(deoxyribonucleotide)m = (deoxyribonucleotide)n+m + AMP + beta-nicotinamide D-nucleotide.. In terms of biological role, DNA ligase that catalyzes the formation of phosphodiester linkages between 5'-phosphoryl and 3'-hydroxyl groups in double-stranded DNA using NAD as a coenzyme and as the energy source for the reaction. It is essential for DNA replication and repair of damaged DNA. The protein is DNA ligase of Acidobacterium capsulatum (strain ATCC 51196 / DSM 11244 / BCRC 80197 / JCM 7670 / NBRC 15755 / NCIMB 13165 / 161).